The following is a 353-amino-acid chain: MTIALGKVTKDENDLFDIMDDWLRRDRFVFVGWSGLLLFPCAYFAVGGWFTGTTFVTSWYTHGLASSYLEGCNFLTAAVSTPANSLAHSLLLLWGPEAQGDFTRWCQLGGLWTFVALHGAFGLIGFMLRQFELARSVQLRPYNAIAFSGPIAVFVSVFLIYPLGQSGWFFAPSFGVAAIFRFILFFQGFHNWTLNPFHMMGVAGVLGAALLCAIHGATVENTLFEDGDGANTFRAFNPTQAEETYSMVTANRFWSQIFGVAFSNKRWLHFFMLFVPVTGLWMSALGVVGLALNLRAYDFVSQEIRAAEDPEFETFYTKNILLNEGIRAWMAAQDQPHENLIFPEEVLPRGNAL.

T2 bears the N-acetylthreonine mark. T2 is subject to Phosphothreonine. Residues 41 to 61 form a helical membrane-spanning segment; it reads CAYFAVGGWFTGTTFVTSWYT. H118 contributes to the chlorophyll a binding site. Residues 125 to 141 traverse the membrane as a helical segment; sequence GFMLRQFELARSVQLRP. Pheophytin a is bound by residues Q130 and N143. The chain crosses the membrane as a helical span at residues 153–166; that stretch reads VFVSVFLIYPLGQS. H198 provides a ligand contact to chlorophyll a. A helical transmembrane segment spans residues 208-228; it reads AALLCAIHGATVENTLFEDGD. H215 and F262 together coordinate a plastoquinone. H215 contributes to the Fe cation binding site. H269 contacts Fe cation. A helical transmembrane segment spans residues 279-295; sequence GLWMSALGVVGLALNLR.

This sequence belongs to the reaction center PufL/M/PsbA/D family. As to quaternary structure, PSII is composed of 1 copy each of membrane proteins PsbA, PsbB, PsbC, PsbD, PsbE, PsbF, PsbH, PsbI, PsbJ, PsbK, PsbL, PsbM, PsbT, PsbX, PsbY, PsbZ, Psb30/Ycf12, at least 3 peripheral proteins of the oxygen-evolving complex and a large number of cofactors. It forms dimeric complexes. It depends on The D1/D2 heterodimer binds P680, chlorophylls that are the primary electron donor of PSII, and subsequent electron acceptors. It shares a non-heme iron and each subunit binds pheophytin, quinone, additional chlorophylls, carotenoids and lipids. There is also a Cl(-1) ion associated with D1 and D2, which is required for oxygen evolution. The PSII complex binds additional chlorophylls, carotenoids and specific lipids. as a cofactor.

The protein localises to the plastid. The protein resides in the chloroplast thylakoid membrane. The catalysed reaction is 2 a plastoquinone + 4 hnu + 2 H2O = 2 a plastoquinol + O2. In terms of biological role, photosystem II (PSII) is a light-driven water:plastoquinone oxidoreductase that uses light energy to abstract electrons from H(2)O, generating O(2) and a proton gradient subsequently used for ATP formation. It consists of a core antenna complex that captures photons, and an electron transfer chain that converts photonic excitation into a charge separation. The D1/D2 (PsbA/PsbD) reaction center heterodimer binds P680, the primary electron donor of PSII as well as several subsequent electron acceptors. D2 is needed for assembly of a stable PSII complex. The protein is Photosystem II D2 protein of Lactuca sativa (Garden lettuce).